A 290-amino-acid chain; its full sequence is Undecaprenyl-diphosphatase (290 aa).

A run of 8 helical transmembrane segments spans residues 1-21 (MFLLELIKGIILGIVEGLTEF), 48-68 (SAFTFKVVIQLGSVFAAAWVF), 101-121 (IHVLVGMVPAGILGFLFDDLI), 125-145 (LFSVPTVLIGLFIGAIYMIIA), 161-181 (INYFQAFVIGISQAIAMWPGF), 202-222 (SDFTFIMSVPIMLAASGLSLL), 231-251 (AHIPFYILGFLAAFIVGLIAI), and 266-286 (FAIYRIVLVIFIAILYFGFGI).

The protein belongs to the UppP family.

It localises to the cell membrane. It carries out the reaction di-trans,octa-cis-undecaprenyl diphosphate + H2O = di-trans,octa-cis-undecaprenyl phosphate + phosphate + H(+). Functionally, catalyzes the dephosphorylation of undecaprenyl diphosphate (UPP). Confers resistance to bacitracin. This is Undecaprenyl-diphosphatase from Staphylococcus epidermidis (strain ATCC 35984 / DSM 28319 / BCRC 17069 / CCUG 31568 / BM 3577 / RP62A).